The primary structure comprises 818 residues: Dapper 1-A (818 aa).

The span at methionine 1 to proline 10 shows a compositional bias: pro residues. Disordered stretches follow at residues methionine 1 to histidine 30, valine 60 to aspartate 80, isoleucine 122 to glycine 144, asparagine 455 to leucine 486, and glutamate 510 to glutamine 530. The segment at methionine 1–serine 337 is interaction with tcf7l1-A. The span at aspartate 21–histidine 30 shows a compositional bias: basic and acidic residues. A coiled-coil region spans residues serine 79–threonine 130. A compositionally biased stretch (basic and acidic residues) spans isoleucine 122–serine 132. The segment covering asparagine 455–leucine 485 has biased composition (polar residues). The span at serine 512–serine 524 shows a compositional bias: basic and acidic residues. The PDZ-binding motif lies at methionine 815–valine 818.

The protein belongs to the dapper family. Interacts with dbf4 and tcf7l1-A. Interacts with dvl2/dsh via the C-terminus. In terms of tissue distribution, expressed in the animal and dorsal marginal regions at late blastula and early gastrula stages. Expressed predominantly in the anterior neural plate at neurulation. Expressed mainly in the ectodermal placodes, including the eye anlagen and the otic vesicle, at later stages of development.

It localises to the cytoplasm. It is found in the nucleus. Involved in regulation of intracellular signaling pathways during development. Specifically thought to play a role in canonical and/or non-canonical Wnt signaling pathways through interaction with DSH (Dishevelled) family proteins. Binds to dvl2/dsh and impedes the degradation of beta-catenin (ctnnb1-A and possibly ctnnb1-B), thereby enhancing the transcriptional activation of target genes of the Wnt signaling pathway. Also promotes catenin delta/ctnnd1 stability which in turn promotes zbtb33/kaiso sequestration and thus is involved in the regulation of zbtb33/kaiso-mediated transcriptional repression. May also bind to and directly stimulate the transcriptional activity of tcf7l1-A. Required for eye development and neural patterning. The sequence is that of Dapper 1-A (dact1-a) from Xenopus laevis (African clawed frog).